The following is a 430-amino-acid chain: Sesquiterpene synthase 15 (430 aa).

Asp182, Asp186, and Glu335 together coordinate Mg(2+). The DDXXD motif signature appears at Asp182–Asp186.

It belongs to the terpene synthase family. Tpsa subfamily. It depends on Mg(2+) as a cofactor. The cofactor is Mn(2+).

It functions in the pathway secondary metabolite biosynthesis; terpenoid biosynthesis. In terms of biological role, sesquiterpene synthase involved in the biosynthesis of volatile compounds. No activity detected with geranyl diphosphate (GPP) and farnesyl diphosphate (FPP) as substrates. This chain is Sesquiterpene synthase 15, found in Solanum lycopersicum (Tomato).